Here is a 219-residue protein sequence, read N- to C-terminus: Transmembrane protein 125 (219 aa).

The next 4 helical transmembrane spans lie at 36-56 (LCFAVAVGLVAGCGAGGVALL), 68-88 (LAVGTALCLLALLVLVKQLMS), 114-134 (ALVVLLSGLVLLVTGLTLAGL), and 147-167 (MLSVGITLAASGALLLLGLLL).

The protein localises to the membrane. The protein is Transmembrane protein 125 (TMEM125) of Bos taurus (Bovine).